A 469-amino-acid polypeptide reads, in one-letter code: Cytochrome c biogenesis protein CcsB (469 aa).

A run of 3 helical transmembrane segments spans residues 30–50, 89–109, and 175–195; these read LRLA…GTVI, TPWF…CSLT, and IGPI…IWGS.

Belongs to the Ccs1/CcsB family. In terms of assembly, may interact with CcsA.

The protein localises to the cellular thylakoid membrane. Functionally, required during biogenesis of c-type cytochromes (cytochrome c6 and cytochrome f) at the step of heme attachment. This chain is Cytochrome c biogenesis protein CcsB, found in Synechococcus sp. (strain JA-2-3B'a(2-13)) (Cyanobacteria bacterium Yellowstone B-Prime).